We begin with the raw amino-acid sequence, 349 residues long: 5,10-methylenetetrahydromethanopterin reductase (349 aa).

This sequence belongs to the mer family. In terms of assembly, homotetramer composed of two loosely associated dimers.

It is found in the cytoplasm. It carries out the reaction 5-methyl-5,6,7,8-tetrahydromethanopterin + oxidized coenzyme F420-(gamma-L-Glu)(n) + H(+) = 5,10-methylenetetrahydromethanopterin + reduced coenzyme F420-(gamma-L-Glu)(n). It participates in one-carbon metabolism; methanogenesis from CO(2); methyl-coenzyme M from 5,10-methylene-5,6,7,8-tetrahydromethanopterin: step 1/2. Requires the presence of relatively high concentrations of either sulfate or phosphate for maximal activity. Functionally, catalyzes the reversible reduction of methylene-H(4)MPT to methyl-H(4)MPT. This Methanopyrus kandleri (strain AV19 / DSM 6324 / JCM 9639 / NBRC 100938) protein is 5,10-methylenetetrahydromethanopterin reductase.